We begin with the raw amino-acid sequence, 185 residues long: DNA-directed RNA polymerase 22 kDa subunit (185 aa).

The protein belongs to the poxviridae DNA-directed RNA polymerase 22 kDa subunit family. As to quaternary structure, the DNA-dependent RNA polymerase used for intermediate and late genes expression consists of eight subunits Rpo30/OPG66, Rpo7/OPG90, Rpo22/OPG103, Rpo147/OPG105, Rpo18/OPG119, Rpo19/OPG131, Rpo132/OPG151 and Rpo35/OPG156. The same holoenzyme, with the addition of the transcription-specificity factor OPG109, is used for early gene expression.

Its subcellular location is the virion. The catalysed reaction is RNA(n) + a ribonucleoside 5'-triphosphate = RNA(n+1) + diphosphate. Functionally, part of the DNA-dependent RNA polymerase which catalyzes the transcription of viral DNA into RNA using the four ribonucleoside triphosphates as substrates. Responsible for the transcription of early, intermediate and late genes. DNA-dependent RNA polymerase associates with the early transcription factor (ETF), itself composed of OPG118 and OPG133, thereby allowing the early genes transcription. Late transcription, and probably also intermediate transcription, require newly synthesized RNA polymerase. The sequence is that of DNA-directed RNA polymerase 22 kDa subunit (OPG103) from Cynomys gunnisoni (Gunnison's prairie dog).